The following is a 706-amino-acid chain: Polycomb protein SCMH1 (706 aa).

MBT repeat units follow at residues 28 to 126 (FTWD…LQPP) and 134 to 235 (SSWP…LQPP). Disordered regions lie at residues 233-350 (QPPG…TVPS) and 576-595 (GSDR…RDPS). Basic residues-rich tracts occupy residues 272–283 (RGRKPGKKRGRT) and 304–319 (FPKK…RKPR). The span at 329–340 (PTTSTPEPDTST) shows a compositional bias: low complexity. Residues 576–591 (GSDRHLESRDPPRLSG) show a composition bias toward basic and acidic residues. Positions 597–662 (WTVEDVMQFV…SFHIDRLKQV (66 aa)) constitute an SAM domain.

Belongs to the SCM family. In terms of assembly, associates with a PRC1-like complex. Interacts with the SAM domain of PHC1 via its SAM domain in vitro. As to expression, most abundant in testis. Moderate levels detected in heart, brain, lung, liver, skeletal muscle and kidney and lower levels in spleen.

Its subcellular location is the nucleus. Functionally, associates with Polycomb group (PcG) multiprotein complexes; the complex class is required to maintain the transcriptionally repressive state of some genes. This chain is Polycomb protein SCMH1, found in Mus musculus (Mouse).